A 99-amino-acid chain; its full sequence is Putative gene 45 protein (99 aa).

The chain is Putative gene 45 protein (45) from Bacillus phage SP01 (Bacteriophage SP01).